Here is a 144-residue protein sequence, read N- to C-terminus: Putative pre-16S rRNA nuclease (144 aa).

Belongs to the YqgF nuclease family.

It is found in the cytoplasm. Functionally, could be a nuclease involved in processing of the 5'-end of pre-16S rRNA. This is Putative pre-16S rRNA nuclease from Pseudomonas aeruginosa (strain LESB58).